The primary structure comprises 432 residues: Enolase (432 aa).

(2R)-2-phosphoglycerate is bound at residue Gln-167. Catalysis depends on Glu-209, which acts as the Proton donor. The Mg(2+) site is built by Asp-246, Glu-290, and Asp-317. Residues Lys-342, Arg-371, Ser-372, and Lys-393 each coordinate (2R)-2-phosphoglycerate. Catalysis depends on Lys-342, which acts as the Proton acceptor.

The protein belongs to the enolase family. As to quaternary structure, component of the RNA degradosome, a multiprotein complex involved in RNA processing and mRNA degradation. The cofactor is Mg(2+).

The protein resides in the cytoplasm. The protein localises to the secreted. It is found in the cell surface. It catalyses the reaction (2R)-2-phosphoglycerate = phosphoenolpyruvate + H2O. The protein operates within carbohydrate degradation; glycolysis; pyruvate from D-glyceraldehyde 3-phosphate: step 4/5. Catalyzes the reversible conversion of 2-phosphoglycerate (2-PG) into phosphoenolpyruvate (PEP). It is essential for the degradation of carbohydrates via glycolysis. This chain is Enolase, found in Escherichia coli O139:H28 (strain E24377A / ETEC).